Consider the following 395-residue polypeptide: Axin-like protein 1 (395 aa).

An RGS domain is found at 4–132 (RSKTFSDRIL…TTTADVSNTW (129 aa)). Positions 190-230 (QETKNSSETEEEKKKERSADPYGSDGFAPPPQSTQTHTLRN) are disordered. Positions 194–208 (NSSETEEEKKKERSA) are enriched in basic and acidic residues. In terms of domain architecture, DIX spans 301–386 (EIQKLTVELR…RITAICRMCP (86 aa)).

Interacts with bar-1, dsh-2, gsk-3, and mig-5.

Functionally, works in parallel with pry-1 in negatively regulating bar-1 signaling in vulval precursor cells and Q neuroblasts. Shown to have a role in excretory cell development. The chain is Axin-like protein 1 (axl-1) from Caenorhabditis briggsae.